The sequence spans 370 residues: Chorismate synthase (370 aa).

Arginine 48 lines the NADP(+) pocket. FMN contacts are provided by residues 125–127 (RSS), 241–242 (NA), glycine 285, 300–304 (KPTSS), and arginine 326.

It belongs to the chorismate synthase family. In terms of assembly, homotetramer. It depends on FMNH2 as a cofactor.

It carries out the reaction 5-O-(1-carboxyvinyl)-3-phosphoshikimate = chorismate + phosphate. Its pathway is metabolic intermediate biosynthesis; chorismate biosynthesis; chorismate from D-erythrose 4-phosphate and phosphoenolpyruvate: step 7/7. In terms of biological role, catalyzes the anti-1,4-elimination of the C-3 phosphate and the C-6 proR hydrogen from 5-enolpyruvylshikimate-3-phosphate (EPSP) to yield chorismate, which is the branch point compound that serves as the starting substrate for the three terminal pathways of aromatic amino acid biosynthesis. This reaction introduces a second double bond into the aromatic ring system. In Jannaschia sp. (strain CCS1), this protein is Chorismate synthase.